The primary structure comprises 170 residues: E1B protein, small T-antigen (170 aa).

Residues 137-170 (PAQPPHGLDPVREEEEEEEEEENLRAGLDPQTEL) form a disordered region. Over residues 148-158 (REEEEEEEEEE) the composition is skewed to acidic residues.

The protein belongs to the adenoviridae E1B 19 kDa protein family.

The protein resides in the host cell membrane. It is found in the host nucleus envelope. Its subcellular location is the host nucleus lamina. Its function is as follows. Putative adenovirus Bcl-2 homolog that inhibits apoptosis induced by TNF or FAS pathways, as well as p53-mediated apoptosis. Without E1B 19K function, virus production is compromised because of premature death of host cell. Interacts with Bax protein in cell lysates. This is E1B protein, small T-antigen from Homo sapiens (Human).